A 200-amino-acid chain; its full sequence is Probable DNA-directed RNA polymerase subunit delta (200 aa).

An HTH HARE-type domain is found at 19–88 (LSMIEVARAI…GDNKWGLRSW (70 aa)). Composition is skewed to acidic residues over residues 125-143 (DSDA…DAYE) and 150-200 (YDDE…TSEE). The disordered stretch occupies residues 125–200 (DSDAIDYNAD…SDDDAETSEE (76 aa)).

Belongs to the RpoE family. As to quaternary structure, RNAP is composed of a core of 2 alpha, a beta and a beta' subunits. The core is associated with a delta subunit and one of several sigma factors.

Its function is as follows. Participates in both the initiation and recycling phases of transcription. In the presence of the delta subunit, RNAP displays an increased specificity of transcription, a decreased affinity for nucleic acids, and an increased efficiency of RNA synthesis because of enhanced recycling. The protein is Probable DNA-directed RNA polymerase subunit delta of Streptococcus pneumoniae serotype 4 (strain ATCC BAA-334 / TIGR4).